A 375-amino-acid polypeptide reads, in one-letter code: Putative type I specificity subunit S.MpnORF638P (375 aa).

The protein belongs to the type-I restriction system S methylase family. The methyltransferase is composed of M and S polypeptides.

Functionally, the specificity (S) subunit of a type I methyltransferase (MTase); this subunit dictates DNA sequence specificity. The single R subunit has multiple frameshifts and is probably not expressed. This is Putative type I specificity subunit S.MpnORF638P from Mycoplasma pneumoniae (strain ATCC 29342 / M129 / Subtype 1) (Mycoplasmoides pneumoniae).